We begin with the raw amino-acid sequence, 320 residues long: Na(+)-translocating NADH-quinone reductase subunit C (320 aa).

Residues 16–36 (WYIVSFILGLSLFAGVLLSTI) form a helical membrane-spanning segment. Thr-285 is subject to FMN phosphoryl threonine.

Belongs to the NqrC family. As to quaternary structure, composed of six subunits; NqrA, NqrB, NqrC, NqrD, NqrE and NqrF. FMN serves as cofactor.

The protein resides in the cell inner membrane. It catalyses the reaction a ubiquinone + n Na(+)(in) + NADH + H(+) = a ubiquinol + n Na(+)(out) + NAD(+). Its function is as follows. NQR complex catalyzes the reduction of ubiquinone-1 to ubiquinol by two successive reactions, coupled with the transport of Na(+) ions from the cytoplasm to the periplasm. NqrA to NqrE are probably involved in the second step, the conversion of ubisemiquinone to ubiquinol. This is Na(+)-translocating NADH-quinone reductase subunit C from Chlamydia pneumoniae (Chlamydophila pneumoniae).